A 198-amino-acid polypeptide reads, in one-letter code: Snake venom metalloproteinase neuwiedase (198 aa).

Positions 8–198 (RYIELVIVAD…QTFLTNHNPQ (191 aa)) constitute a Peptidase M12B domain. Glu-11 and Asp-95 together coordinate Ca(2+). His-144 is a binding site for Zn(2+). Glu-145 is a catalytic residue. Zn(2+)-binding residues include His-148 and His-154. 2 disulfides stabilise this stretch: Cys-159/Cys-183 and Cys-161/Cys-166.

It belongs to the venom metalloproteinase (M12B) family. P-I subfamily. Zn(2+) is required as a cofactor. As to expression, expressed by the venom gland.

It is found in the secreted. With respect to regulation, inhibited by EDTA, EGTA and 1,10-phenanthroline, partially inhibited by beta-mercaptoethanol and not inhibited by serine protease inhibitors (leupeptin and aprotinin). Also inhibited by an excess of zinc, mercury and magnesium ions. Extracts of the plant Casearia mariquitensis neutralizes the decrease of platelets and plasma fibrinogen induced by the protease. The same extracts also partially inhibit Bbeta chain cleavage, but not Aalpha chain cleavage. This metalloprotease hydrolyzes the Aalpha chain of fibrin and fibrinogen first followed by the Bbeta chain and shows no effect on the gamma chain. It is also able to degrade type I collagen, fibronectin, laminin and induces inflammatory reaction. It is devoid of hemorrhagic and thrombotic activities, except in lung where it induces pulmonary bleeding. It also induces a mild myotoxic reaction. It is not able to inhibit platelet aggregation, but it induces decrease of platelets and plasma fibrinogen. It contributes to local tissue damage by inducing edema, inflammatory infiltrate and mild myotoxicity, and by degrading extracellular matrix components. The sequence is that of Snake venom metalloproteinase neuwiedase from Bothrops pauloensis (Neuwied's lancehead).